A 345-amino-acid chain; its full sequence is Dihydroorotase (345 aa).

Residues histidine 14 and histidine 16 each contribute to the Zn(2+) site. Residues 16-18 and asparagine 42 each bind substrate; that span reads HLR. Lysine 102, histidine 139, and histidine 177 together coordinate Zn(2+). The residue at position 102 (lysine 102) is an N6-carboxylysine. Histidine 139 contacts substrate. Leucine 222 provides a ligand contact to substrate. Aspartate 250 serves as a coordination point for Zn(2+). Aspartate 250 is a catalytic residue. Substrate is bound by residues histidine 254 and alanine 266.

The protein belongs to the metallo-dependent hydrolases superfamily. DHOase family. Class II DHOase subfamily. Homodimer. Zn(2+) serves as cofactor.

It catalyses the reaction (S)-dihydroorotate + H2O = N-carbamoyl-L-aspartate + H(+). It functions in the pathway pyrimidine metabolism; UMP biosynthesis via de novo pathway; (S)-dihydroorotate from bicarbonate: step 3/3. Functionally, catalyzes the reversible cyclization of carbamoyl aspartate to dihydroorotate. The sequence is that of Dihydroorotase from Nitrosomonas eutropha (strain DSM 101675 / C91 / Nm57).